The primary structure comprises 1213 residues: uncharacterized protein (1213 aa).

The region spanning 289 to 390 (ATKRQGWLLR…WGSVINNARE (102 aa)) is the PH domain. The 170-residue stretch at 776–945 (LDDIVFDRVY…EVNFLEKATR (170 aa)) folds into the VASt domain. 2 consecutive transmembrane segments (helical) span residues 996-1016 (LFLQ…FHIF) and 1025-1045 (FLVI…FCFG).

The protein localises to the cytoplasm. It localises to the nucleus membrane. It is found in the cytoskeleton. Its subcellular location is the microtubule organizing center. The protein resides in the spindle pole body. This is an uncharacterized protein from Schizosaccharomyces pombe (strain 972 / ATCC 24843) (Fission yeast).